A 220-amino-acid polypeptide reads, in one-letter code: MQVNIAPSWKPYLEEEFNKPYFEQLAAFVKAEYKSNTIYPPAKQIFNAFELCSFDNTKVVILGQDPYHGFKQANGLSFSVGKEVRMPPSLVNIFKEIESDLGHPVPTNGDLTRWAQQGVLLLNATLTVREKQPGSHQNKGWETFTDTIISILSQHKQHLVFMLWGNYAQKKEVLIDTSKHLVLKSAHPSPYAADRGFFGNKHFSKANAYLVEHGLTPINW.

Residue D65 is the Proton acceptor of the active site.

This sequence belongs to the uracil-DNA glycosylase (UDG) superfamily. UNG family.

The protein resides in the cytoplasm. The enzyme catalyses Hydrolyzes single-stranded DNA or mismatched double-stranded DNA and polynucleotides, releasing free uracil.. Its function is as follows. Excises uracil residues from the DNA which can arise as a result of misincorporation of dUMP residues by DNA polymerase or due to deamination of cytosine. This Amoebophilus asiaticus (strain 5a2) protein is Uracil-DNA glycosylase.